Here is an 88-residue protein sequence, read N- to C-terminus: Small ribosomal subunit protein bS20 (88 aa).

The segment at Met-1 to Leu-28 is disordered.

The protein belongs to the bacterial ribosomal protein bS20 family.

Binds directly to 16S ribosomal RNA. This is Small ribosomal subunit protein bS20 from Streptomyces avermitilis (strain ATCC 31267 / DSM 46492 / JCM 5070 / NBRC 14893 / NCIMB 12804 / NRRL 8165 / MA-4680).